The primary structure comprises 82 residues: Small ribosomal subunit protein bS16 (82 aa).

The protein belongs to the bacterial ribosomal protein bS16 family.

This chain is Small ribosomal subunit protein bS16, found in Pasteurella multocida (strain Pm70).